The sequence spans 389 residues: uncharacterized protein (389 aa).

Transmembrane regions (helical) follow at residues 31 to 51 (LFIVHSAIGAGVAYWIAVEVI), 96 to 116 (IMQIGTGYWQIFVVVGLALLV), 123 to 143 (APLVSNQMAIGGILIATMFPP), and 152 to 172 (MIDAFIGGGVGILVIALLPSS).

The protein to M.tuberculosis Rv2571c.

It is found in the cell membrane. This is an uncharacterized protein from Corynebacterium glutamicum (strain ATCC 13032 / DSM 20300 / JCM 1318 / BCRC 11384 / CCUG 27702 / LMG 3730 / NBRC 12168 / NCIMB 10025 / NRRL B-2784 / 534).